Reading from the N-terminus, the 757-residue chain is Zinc finger CCCH domain-containing protein 5 (757 aa).

The interval 1 to 127 is disordered; the sequence is MEQANEKEEE…REEEERRWKD (127 aa). Basic and acidic residues predominate over residues 13–35; the sequence is HEEAAGEKESFEESKEKAAEMSR. Basic residues predominate over residues 36–50; that stretch reads KEKRKAMKKLKRKQV. Over residues 51–127 the composition is skewed to basic and acidic residues; the sequence is RKEIAAKERE…REEEERRWKD (77 aa). The C3H1-type 1 zinc finger occupies 240–268; sequence EQDKAHCPFHLKTGACRFGQRCSRVHFYP. In terms of domain architecture, RRM spans 295-372; that stretch reads YTDEEAELCY…KQVNCEFVNI (78 aa). Residues 374–404 form a C3H1-type 2 zinc finger; that stretch reads RWKVAICGEYMKSRLKTCSRGSACNFIHCFR. The disordered stretch occupies residues 441 to 757; it reads HESSGSLNDS…EEEIERWRPV (317 aa). The span at 444 to 455 shows a compositional bias: polar residues; the sequence is SGSLNDSISDLS. The segment covering 487–546 has biased composition (basic and acidic residues); that stretch reads YHGDTQDSTREDKLRRHAENCHDGDDSPSRDGSLEREMYKERRYAKDTLHRDSRWSEHSP. Composition is skewed to basic residues over residues 547-557 and 600-609; these read GHRVGRKRIHG and KTHRSSRKHS. Composition is skewed to basic and acidic residues over residues 610–634, 644–672, and 681–721; these read REGS…DKSH, RSSS…KRSV, and SDKD…ETHK. Over residues 722-733 the composition is skewed to basic residues; the sequence is ERRHRHRKRRRT.

The chain is Zinc finger CCCH domain-containing protein 5 from Arabidopsis thaliana (Mouse-ear cress).